We begin with the raw amino-acid sequence, 987 residues long: Voltage-gated delayed rectifier potassium channel KCNH1 (987 aa).

Over 1 to 220 (MTMAGGRKGL…LHYCVFKTTW (220 aa)) the chain is Cytoplasmic. The 81-residue stretch at 14 to 94 (QNTFLENIVR…QTFENYEMNS (81 aa)) folds into the PAS domain. The PAC domain occupies 93-145 (NSFEILMYKKNRTPVWFFVKIAPIRNEQDKVVLFLCTFSDITAFKQPIEDDSC). Residues 151–162 (FARLTRALTSSR) form a required for phosphatidylinositol bisphosphate binding region. The chain crosses the membrane as a helical span at residues 221-241 (DWIILILTFYTAILVPYNVSF). Over 242–248 (KTRQNNV) the chain is Extracellular. A helical membrane pass occupies residues 249 to 269 (AWLVVDSIVDVIFLVDIVLNF). Residues 270–290 (HTTFVGPAGEVISDPKLIRMN) are Cytoplasmic-facing. The helical transmembrane segment at 291–309 (YLKTWFVIDLLSCLPYDVI) threads the bilayer. Over 310-345 (NAFENVDEVSAFMGDPGKIGFADQIPPPLEGRESQG) the chain is Extracellular. A helical; Voltage-sensor transmembrane segment spans residues 346–368 (ISSLFSSLKVVRLLRLGRVARKL). Over 369-377 (DHYIEYGAA) the chain is Cytoplasmic. The chain crosses the membrane as a helical span at residues 378-399 (VLVLLVCVFGLAAHWMACIWYS). The Extracellular portion of the chain corresponds to 400–448 (IGDYEIFDEDTKTIRNNSWLYQLAMDIGTPYQFNGSGSGKWEGGPSKNS). Asn-415 and Asn-433 each carry an N-linked (GlcNAc...) asparagine glycan. Positions 449 to 470 (VYISSLYFTMTSLTSVGFGNIA) form an intramembrane region, pore-forming. Positions 463–468 (SVGFGN) match the Selectivity filter motif. At 471-477 (PSTDIEK) the chain is on the extracellular side. The helical transmembrane segment at 478-498 (IFAVAIMMIGSLLYATIFGNV) threads the bilayer. Topologically, residues 499 to 987 (TTIFQQMYAN…ESERDIFGAS (489 aa)) are cytoplasmic. The tract at residues 673 to 770 (KRDALQKVLE…LDDLDVEKGS (98 aa)) is calmodulin-binding. Residues 699-701 (YNL) form an interaction with cyclic nucleotide-binding pocket region. The CAD (involved in subunit assembly) stretch occupies residues 922 to 962 (AAVLEVKHELKEDIKALSTKMTSIEKQLSEILRILTSRRSS). The segment at 960-987 (RSSQSPQELFEISRPQSPESERDIFGAS) is disordered. Phosphoserine occurs at positions 972, 976, and 979. The span at 978–987 (ESERDIFGAS) shows a compositional bias: basic and acidic residues.

Belongs to the potassium channel family. H (Eag) (TC 1.A.1.20) subfamily. Kv10.1/KCNH1 sub-subfamily. As to quaternary structure, homomultimer. The potassium channel is composed of a homo- or heterotetrameric complex of pore-forming alpha subunits that can associate with modulating beta subunits. Heteromultimer with KCNH5/EAG2. Interacts with ALG10B. Interacts with RABEP1. Interacts (via C-terminus) with CTTN. Interacts (via C-terminal cytoplasmic region) with Ca(2+)-bound calmodulin. Channel activity is regulated via tyrosine phosphorylation/dephosphorylation by SRC and PTPN6. As to expression, detected in cerebellum, cortex and retina.

The protein resides in the cell membrane. Its subcellular location is the nucleus inner membrane. The protein localises to the cell projection. It localises to the dendrite. It is found in the axon. The protein resides in the presynaptic cell membrane. Its subcellular location is the perikaryon. The protein localises to the postsynaptic density membrane. It localises to the early endosome membrane. The catalysed reaction is K(+)(in) = K(+)(out). Channel activity is inhibited by interaction with Ca(2+)-bound calmodulin. Interaction of a single pore-forming alpha subunit with a calmodulin chain is sufficient to promote channel closure. Extracellular magnesium ion concentrations up to 4 mM modulate channel activity by slowing down current activation in a reversible fashion. Channel activity is not regulated by cyclic nucleotides. Channel activity is inhibited by binding intracellular phosphatidylinositol-3,5-bisphosphate and phosphatidylinositol-4,5-bisphosphate (PIP2), but is not inhibited by phosphatidylinositol 4-phosphate. Pore-forming (alpha) subunit of a voltage-gated delayed rectifier potassium channel that mediates outward-rectifying potassium currents which, on depolarization, reaches a steady-state level and do not inactivate. The activation kinetics depend on the prepulse potential and external divalent cation concentration. With negative prepulses, the current activation is delayed and slowed down several fold, whereas more positive prepulses speed up activation. The time course of activation is biphasic with a fast and a slowly activating current component. Activates at more positive membrane potentials and exhibit a steeper activation curve. Channel properties are modulated by subunit assembly. Mediates IK(NI) current in myoblasts. Involved in the regulation of cell proliferation and differentiation, in particular adipogenic and osteogenic differentiation in bone marrow-derived mesenchymal stem cells (MSCs). The chain is Voltage-gated delayed rectifier potassium channel KCNH1 from Bos taurus (Bovine).